The chain runs to 345 residues: MGTTYKQSGVDIEAGDAFVERIKPHAARTMRPEVMGGVGGFGGLFALPPGKYQQPVLVAGTDGVGTKLKVAFAAGRHGTVGIDLVAMSVNDILTCGAEPLFFLDYFATGRLEVDDAAEVVKGIALGCEQAGCALLGGETAEMPGFYARGEYDLAGFCVGVVERAAIIDGKSVKPGDALIGLPSSGLHSNGYSLARKVLLDDGKLALDATPEGLDRPLVDALLEPTRIYVKDVLALLQAVKVKGLAHITGSGIPGNLPRCLPDGTRAVLSEQTWPKPPIFDLIAKLGSVARDEMFNTFNMGLGLILVVAKEDVAQALSVLSGRGVQAFEVGRVEAGQGEATAVIDP.

Belongs to the AIR synthase family.

Its subcellular location is the cytoplasm. It catalyses the reaction 2-formamido-N(1)-(5-O-phospho-beta-D-ribosyl)acetamidine + ATP = 5-amino-1-(5-phospho-beta-D-ribosyl)imidazole + ADP + phosphate + H(+). It functions in the pathway purine metabolism; IMP biosynthesis via de novo pathway; 5-amino-1-(5-phospho-D-ribosyl)imidazole from N(2)-formyl-N(1)-(5-phospho-D-ribosyl)glycinamide: step 2/2. In Myxococcus xanthus (strain DK1622), this protein is Phosphoribosylformylglycinamidine cyclo-ligase.